Consider the following 703-residue polypeptide: 1,4-alpha-glucan-branching enzyme (703 aa).

The (1,4-alpha-D-glucosyl)n site is built by W93 and K130. Residue D355 is the Nucleophile of the active site. Catalysis depends on E415, which acts as the Proton donor.

Belongs to the glycosyl hydrolase 13 family. GlgB subfamily.

Its subcellular location is the cytoplasm. It carries out the reaction Transfers a segment of a (1-&gt;4)-alpha-D-glucan chain to a primary hydroxy group in a similar glucan chain.. It participates in glycan biosynthesis; glycogen biosynthesis. Its function is as follows. Glycogen-branching enzyme participates in the glycogen biosynthetic process along with glycogenin and glycogen synthase. Generates alpha-1,6-glucosidic branches from alpha-1,4-linked glucose chains, to increase solubility of the glycogen polymer. The sequence is that of 1,4-alpha-glucan-branching enzyme (GLC3) from Eremothecium gossypii (strain ATCC 10895 / CBS 109.51 / FGSC 9923 / NRRL Y-1056) (Yeast).